The sequence spans 689 residues: Choline transporter-like 1 (689 aa).

A helical membrane pass occupies residues 23 to 43 (IFWLVVYILFWIALLVIAVFS). Residue asparagine 134 is glycosylated (N-linked (GlcNAc...) asparagine). Transmembrane regions (helical) follow at residues 199 to 219 (FSDIYKTWPTVLLLVGLSLIF) and 233 to 255 (IISWLICIFVAVASIGITAVLWW). Asparagine 279 carries an N-linked (GlcNAc...) asparagine glycan. 2 consecutive transmembrane segments (helical) span residues 283-303 (IYVLAILATCIMIILLVVIYY) and 333-353 (VLAFIALAVFLSFWMVVIVCL). Asparagine 375 and asparagine 389 each carry an N-linked (GlcNAc...) asparagine glycan. 4 helical membrane passes run 412-432 (IYIIGLVWTSEFIFACQQLVI), 461-481 (LGSVAKGSFIITLFKIPRLIL), 562-582 (LVLFLGKLAVAALCGLISILM), and 591-611 (FYMAPVIIITLFSFFVAHIVL).

This sequence belongs to the CTL (choline transporter-like) family.

It localises to the membrane. This is Choline transporter-like 1 from Aedes aegypti (Yellowfever mosquito).